A 610-amino-acid polypeptide reads, in one-letter code: Calmegin (610 aa).

An N-terminal signal peptide occupies residues 1-19 (MHFQAFWLCLGLLFISINA). At 20–471 (EFMDDDVETE…LMAAAEGHPW (452 aa)) the chain is on the lumenal side. Position 128 is an N6-acetyllysine (K128). C151 and C185 are oxidised to a cystine. Positions 258–338 (VPPIKPPKEI…KPDDWNEDTD (81 aa)) are disordered. Basic and acidic residues predominate over residues 263-284 (PPKEIEDPNDKKPEEWDERAKI). 8 consecutive repeat copies span residues 267–280 (IEDP…EWDE), 284–297 (IPDP…DWDE), 303–316 (IEDS…GWLD), 322–335 (IPDP…DWNE), 339–352 (GEWE…PACR), 356–369 (GEWK…PKYK), 370–383 (GVWR…PNYQ), and 384–397 (GIWS…PDYF). The segment covering 317 to 332 (DEPKFIPDPNAEKPDD) has biased composition (basic and acidic residues). The tract at residues 317–350 (DEPKFIPDPNAEKPDDWNEDTDGEWEAPQILNPA) is interaction with PPIB. The cysteines at positions 351 and 355 are disulfide-linked. A helical membrane pass occupies residues 472-492 (LWLIYLVTAGVPIALITSFCW). Residues 493 to 610 (PRKVKKKHKD…SVRKRRVRKD (118 aa)) are Cytoplasmic-facing. A compositionally biased stretch (basic and acidic residues) spans 521-548 (QEEKEEKAALEKPMDLEEEKKQNDGEML). Residues 521–610 (QEEKEEKAAL…SVRKRRVRKD (90 aa)) form a disordered region. Residues 549–571 (EKEEESEPEEKSEEEIEIIEGQE) are compositionally biased toward acidic residues. A phosphoserine mark is found at S560, S576, S579, S581, S591, S594, and S601. Positions 601–610 (SVRKRRVRKD) are enriched in basic residues.

It belongs to the calreticulin family. Interacts with PPIB. Interacts with ADAM2. Interacts with PDILT. As to expression, detected in testis (at protein level). Detected in testis.

The protein resides in the endoplasmic reticulum membrane. Its function is as follows. Functions during spermatogenesis as a chaperone for a range of client proteins that are important for sperm adhesion onto the egg zona pellucida and for subsequent penetration of the zona pellucida. Required for normal sperm migration from the uterus into the oviduct. Required for normal male fertility. Binds calcium ions. This Homo sapiens (Human) protein is Calmegin (CLGN).